A 181-amino-acid chain; its full sequence is Protein FAM237A (181 aa).

Residues 1-33 (MADPGNRGGIHRPLSFTCSLLIVGMCCVSPFFC) form the signal peptide. Leu113 is subject to Leucine amide. Positions 114–181 (GRRQLVGEEE…GKVNLEIKRK (68 aa)) are cleaved as a propeptide — removed in the mature form.

The active form requires C-terminal amidation and disulfide bond formation. Expressed in the pituitary, testis, and heart and at lower levels in the brain.

The protein resides in the secreted. May be capable of activating GPR83 via the GNAQ signaling pathway. The sequence is that of Protein FAM237A from Homo sapiens (Human).